The chain runs to 315 residues: MILLFYTSSFILDCLLGDPYSWPHPIKAIGNLIKWLTIILRKIFHGKSLYFAGGLLFVLTVGMTGVVSWFILFLSAKIAYWLYVAVFVYLGYTTLAMTCLAKEARKIQRTLADGDLAAARVQVGMIVGRDTDKLTAEEISKATIETVAENTADGVIAPLFYLFIGGPVLALMYKAVNTLDSMVGYKNEKYRAIGFVSAKMDDIANFIPARLAWFFLVIASFILRYDGRASWQIGLRDRKNHTSPNCAYPEGAVAGALGITLGGTHEYFGETVIKPTIGSGNKPVSEKEISQTIHLLYTASTIAFIIFASIYLLLF.

The next 5 membrane-spanning stretches (helical) occupy residues 54 to 74 (GLLFVLTVGMTGVVSWFILFL), 78 to 98 (IAYWLYVAVFVYLGYTTLAMT), 152 to 172 (ADGVIAPLFYLFIGGPVLALM), 203 to 223 (IANFIPARLAWFFLVIASFIL), and 295 to 315 (LLYTASTIAFIIFASIYLLLF).

The protein belongs to the CobD/CbiB family.

Its subcellular location is the cell membrane. The protein operates within cofactor biosynthesis; adenosylcobalamin biosynthesis. Functionally, converts cobyric acid to cobinamide by the addition of aminopropanol on the F carboxylic group. This Listeria monocytogenes serotype 4b (strain F2365) protein is Cobalamin biosynthesis protein CobD.